Here is a 395-residue protein sequence, read N- to C-terminus: Elongation factor Tu (395 aa).

The 195-residue stretch at 10-204 (KPHVNIGTIG…AVDSYIPTPE (195 aa)) folds into the tr-type G domain. Positions 19 to 26 (GHVDHGKT) are G1. Position 19-26 (19-26 (GHVDHGKT)) interacts with GTP. Residue Thr26 coordinates Mg(2+). Positions 60–64 (GITIS) are G2. Residues 81–84 (DCPG) form a G3 region. GTP-binding positions include 81 to 85 (DCPGH) and 136 to 139 (NKCD). The tract at residues 136 to 139 (NKCD) is G4. Positions 174 to 176 (SAL) are G5.

This sequence belongs to the TRAFAC class translation factor GTPase superfamily. Classic translation factor GTPase family. EF-Tu/EF-1A subfamily. In terms of assembly, monomer.

The protein resides in the cytoplasm. It carries out the reaction GTP + H2O = GDP + phosphate + H(+). Functionally, GTP hydrolase that promotes the GTP-dependent binding of aminoacyl-tRNA to the A-site of ribosomes during protein biosynthesis. This chain is Elongation factor Tu, found in Listeria monocytogenes serotype 4b (strain CLIP80459).